Consider the following 185-residue polypeptide: MMEEIDRFQVPTAHSEMQPLDPAAASISDGDCDAREGESVAMNYKPSPLQVKLEKQRELARKGSLKNGSMGSPVNQQPKKNNVMARTRLVVPNKGYSSLDQSPDEKPLVALDTDSDDDFDMSRYSSSGYSSAEQINQDLNIQLLKDGYRLDEIPDDEDLDLIPPKSVNPTCMCCQATSSTACHIQ.

The residue at position 1 (methionine 1) is an N-acetylmethionine. Positions methionine 1 to serine 131 are disordered. Serine 47 is subject to Phosphoserine. The segment covering lysine 52–arginine 61 has biased composition (basic and acidic residues). A compositionally biased stretch (polar residues) spans lysine 66–lysine 80. 2 positions are modified to phosphoserine: serine 72 and serine 102. At threonine 113 the chain carries Phosphothreonine. Phosphoserine is present on residues serine 115 and serine 122. Positions serine 122–serine 131 are enriched in low complexity.

It belongs to the FAM219 family.

This is Protein FAM219A (FAM219A) from Homo sapiens (Human).